The sequence spans 329 residues: Sideroflexin-1.1 (329 aa).

5 helical membrane passes run 100–122 (MPGN…GVVF), 150–167 (LFVS…VALG), 178–198 (LAAR…NIPM), 232–254 (VTLS…MNRI), and 274–294 (IQTL…CALF).

Belongs to the sideroflexin family.

The protein resides in the mitochondrion inner membrane. The enzyme catalyses L-serine(in) = L-serine(out). It carries out the reaction L-alanine(in) = L-alanine(out). The catalysed reaction is L-cysteine(in) = L-cysteine(out). Amino acid transporter importing serine, an essential substrate of the mitochondrial branch of the one-carbon pathway, into mitochondria. Mitochondrial serine is then converted to glycine and formate, which exits to the cytosol where it is used to generate the charged folates that serve as one-carbon donors. May also transport other amino acids including alanine and cysteine. The protein is Sideroflexin-1.1 of Caenorhabditis elegans.